A 1070-amino-acid chain; its full sequence is [F-actin]-monooxygenase MICAL1 (1070 aa).

Positions 1-489 (MASTISTNPA…RDLYDMEAKE (489 aa)) are monooxygenase domain. Residues cysteine 95, 114 to 116 (EKR), 121 to 123 (RHN), phenylalanine 181, tyrosine 293, and aspartate 393 each bind FAD. At threonine 475 the chain carries Phosphothreonine. One can recognise a Calponin-homology (CH) domain in the interval 508–612 (VGSQEELLRW…YLSHFHSAFK (105 aa)). A disordered region spans residues 643-690 (QRTRTQENGEDAGGKKPRLEVKAETPSTEEPPVPKPDEPMTPPSQQQD). The span at 646-665 (RTQENGEDAGGKKPRLEVKA) shows a compositional bias: basic and acidic residues. The segment covering 671-684 (EEPPVPKPDEPMTP) has biased composition (pro residues). The region spanning 695-757 (DLCALCGQHL…LQHLPQTGHE (63 aa)) is the LIM zinc-binding domain. Zn(2+)-binding residues include cysteine 697, cysteine 700, histidine 718, cysteine 721, cysteine 724, cysteine 727, cysteine 747, and histidine 750. Disordered stretches follow at residues 754–838 (TGHE…RSCS) and 865–887 (MEMGEEERSSSSEEETEEEEDVP). Basic and acidic residues predominate over residues 755-766 (GHEEDSSDRGPE). Positions 770 to 781 (LPMSSENNTPSG) are enriched in polar residues. Phosphoserine is present on residues serine 793, serine 875, and serine 876. The segment covering 876-887 (SEEETEEEEDVP) has biased composition (acidic residues). The interval 904-1070 (GTMNNYPTWR…ELASEPGVQG (167 aa)) is important for interaction with RAB8A. In terms of domain architecture, bMERB spans 921–1070 (KEEEMKRFCK…ELASEPGVQG (150 aa)). Residues 928-1030 (FCKAQAIQRR…EETLKTAADR (103 aa)) adopt a coiled-coil conformation. Serine 1060 is modified (phosphoserine).

It belongs to the Mical family. As to quaternary structure, interacts with STK38 and STK38L. Associates with the SH3 domain of NEDD9. Interacts with VIM and PLXNA3. Interacts with RAB1B, RAB8A, RAB10, RAB13 and RAB15 (in their GTP-bound forms); binding to RAB1B is of low affinity compared to other Rab proteins; at least in case of RAB8A and RAB10 can bind 2 molecules of the Rab proteins simultaneously. Interacts with GRAF1/ARHGAP26, GRAF2/ARHGAP10, RAB8A, RAB8B and RAB10; may bind simultaneously to GRAFs and Rabs and connects GRAFs to Rabs. Does not interact with RAB1 and RAB11A. It depends on FAD as a cofactor.

It is found in the cytoplasm. It localises to the cytoskeleton. The protein localises to the endosome membrane. The protein resides in the midbody. The catalysed reaction is L-methionyl-[F-actin] + NADPH + O2 + H(+) = L-methionyl-(R)-S-oxide-[F-actin] + NADP(+) + H2O. It carries out the reaction NADPH + O2 + H(+) = H2O2 + NADP(+). Its function is as follows. Monooxygenase that promotes depolymerization of F-actin by mediating oxidation of specific methionine residues on actin to form methionine-sulfoxide, resulting in actin filament disassembly and preventing repolymerization. In the absence of actin, it also functions as a NADPH oxidase producing H(2)O(2). Acts as a cytoskeletal regulator that connects NEDD9 to intermediate filaments. Also acts as a negative regulator of apoptosis via its interaction with STK38 and STK38L; acts by antagonizing STK38 and STK38L activation by MST1/STK4. Involved in regulation of lamina-specific connectivity in the nervous system such as the development of lamina-restricted hippocampal connections. Through redox regulation of the actin cytoskeleton controls the intracellular distribution of secretory vesicles containing L1/neurofascin/NgCAM family proteins in neurons, thereby regulating their cell surface levels. May act as Rab effector protein and play a role in vesicle trafficking. Promotes endosomal tubule extension by associating with RAB8 (RAB8A or RAB8B), RAB10 and GRAF (GRAF1/ARHGAP26 or GRAF2/ARHGAP10) on the endosomal membrane which may connect GRAFs to Rabs, thereby participating in neosynthesized Rab8-Rab10-Rab11-dependent protein export. The protein is [F-actin]-monooxygenase MICAL1 (MICAL1) of Bos taurus (Bovine).